The primary structure comprises 380 residues: Queuine tRNA-ribosyltransferase (380 aa).

Catalysis depends on aspartate 96, which acts as the Proton acceptor. Substrate-binding positions include 96–100, aspartate 150, glutamine 193, and glycine 220; that span reads DSGGF. An RNA binding region spans residues 251–257; sequence GVGAPDS. Residue aspartate 270 is the Nucleophile of the active site. The segment at 275–279 is RNA binding; important for wobble base 34 recognition; sequence TRIAR. Cysteine 308, cysteine 310, cysteine 313, and histidine 339 together coordinate Zn(2+).

It belongs to the queuine tRNA-ribosyltransferase family. As to quaternary structure, homodimer. Within each dimer, one monomer is responsible for RNA recognition and catalysis, while the other monomer binds to the replacement base PreQ1. The cofactor is Zn(2+).

The catalysed reaction is 7-aminomethyl-7-carbaguanine + guanosine(34) in tRNA = 7-aminomethyl-7-carbaguanosine(34) in tRNA + guanine. It functions in the pathway tRNA modification; tRNA-queuosine biosynthesis. Its function is as follows. Catalyzes the base-exchange of a guanine (G) residue with the queuine precursor 7-aminomethyl-7-deazaguanine (PreQ1) at position 34 (anticodon wobble position) in tRNAs with GU(N) anticodons (tRNA-Asp, -Asn, -His and -Tyr). Catalysis occurs through a double-displacement mechanism. The nucleophile active site attacks the C1' of nucleotide 34 to detach the guanine base from the RNA, forming a covalent enzyme-RNA intermediate. The proton acceptor active site deprotonates the incoming PreQ1, allowing a nucleophilic attack on the C1' of the ribose to form the product. After dissociation, two additional enzymatic reactions on the tRNA convert PreQ1 to queuine (Q), resulting in the hypermodified nucleoside queuosine (7-(((4,5-cis-dihydroxy-2-cyclopenten-1-yl)amino)methyl)-7-deazaguanosine). In Streptococcus uberis (strain ATCC BAA-854 / 0140J), this protein is Queuine tRNA-ribosyltransferase.